Here is a 355-residue protein sequence, read N- to C-terminus: MRRLLTLTTLLAGVPLAAPVCAEQVFSFQRAAGQLPKTVVPVSYGINISTDIDNLKLTGQETIQVDVRTPTEDVTLNQAGLHLAGAVLDNGVKATITQDDAAETATLHFPAKVSKGAHTLVITYSGPILKTPNGIYVDDYTAPSGETKRMLVTQFEVADARRMFPGWDEPAFKATFQLNVTLPKEAVAVSNMPVTQSTPEGTSQKRVSFATTPRMSTYLLALVAGDMKSVQGQADGTPLAVYAPSGLEEQGEYALHASEKILPYYNNYFGVKYPLPQMDMVAIPGNYQAGAMENWGLLTYIDNVLLFDPPNSTPRTRELIYEVVAHEMAHQWSGDLVTMGWWDNIWLNEGFASWM.

Residues glutamate 156 and 290–294 (GAMEN) each bind substrate. Residue histidine 326 coordinates Zn(2+). Glutamate 327 functions as the Proton acceptor in the catalytic mechanism. The Zn(2+) site is built by histidine 330 and glutamate 349. Glutamate 349 is a substrate binding site.

The protein belongs to the peptidase M1 family. Zn(2+) serves as cofactor.

The protein resides in the cytoplasm. It catalyses the reaction Release of an N-terminal amino acid, Xaa-|-Yaa- from a peptide, amide or arylamide. Xaa is preferably Ala, but may be most amino acids including Pro (slow action). When a terminal hydrophobic residue is followed by a prolyl residue, the two may be released as an intact Xaa-Pro dipeptide.. Functionally, aminopeptidase N is involved in the degradation of intracellular peptides generated by protein breakdown during normal growth as well as in response to nutrient starvation. The sequence is that of Aminopeptidase N (pepN) from Acetobacter pasteurianus (Acetobacter turbidans).